Here is a 354-residue protein sequence, read N- to C-terminus: ATPase GET3 (354 aa).

26-33 (KGGVGKTT) is an ATP binding site. Residue Asp57 is part of the active site. Positions 245 and 272 each coordinate ATP. Residues Cys285 and Cys288 each contribute to the Zn(2+) site.

The protein belongs to the arsA ATPase family. Homodimer. Component of the Golgi to ER traffic (GET) complex, which is composed of GET1, GET2 and GET3. Within the complex, GET1 and GET2 form a heterotetramer which is stabilized by phosphatidylinositol binding and which binds to the GET3 homodimer. Interacts with the chloride channel protein GEF1.

It is found in the cytoplasm. Its subcellular location is the endoplasmic reticulum. It localises to the golgi apparatus. Functionally, ATPase required for the post-translational delivery of tail-anchored (TA) proteins to the endoplasmic reticulum. Recognizes and selectively binds the transmembrane domain of TA proteins in the cytosol. This complex then targets to the endoplasmic reticulum by membrane-bound receptors GET1 and GET2, where the tail-anchored protein is released for insertion. This process is regulated by ATP binding and hydrolysis. ATP binding drives the homodimer towards the closed dimer state, facilitating recognition of newly synthesized TA membrane proteins. ATP hydrolysis is required for insertion. Subsequently, the homodimer reverts towards the open dimer state, lowering its affinity for the GET1-GET2 receptor, and returning it to the cytosol to initiate a new round of targeting. Cooperates with the HDEL receptor ERD2 to mediate the ATP-dependent retrieval of resident ER proteins that contain a C-terminal H-D-E-L retention signal from the Golgi to the ER. Involved in low-level resistance to the oxyanions arsenite and arsenate, and in heat tolerance. This Saccharomyces cerevisiae (strain RM11-1a) (Baker's yeast) protein is ATPase GET3.